The following is an 89-amino-acid chain: Small ribosomal subunit protein uS15 (89 aa).

This sequence belongs to the universal ribosomal protein uS15 family. In terms of assembly, part of the 30S ribosomal subunit. Forms a bridge to the 50S subunit in the 70S ribosome, contacting the 23S rRNA.

In terms of biological role, one of the primary rRNA binding proteins, it binds directly to 16S rRNA where it helps nucleate assembly of the platform of the 30S subunit by binding and bridging several RNA helices of the 16S rRNA. Forms an intersubunit bridge (bridge B4) with the 23S rRNA of the 50S subunit in the ribosome. This is Small ribosomal subunit protein uS15 from Lactococcus lactis subsp. lactis (strain IL1403) (Streptococcus lactis).